Consider the following 426-residue polypeptide: Chaperone SurA (426 aa).

The signal sequence occupies residues 1–13 (MLGALFLSTAASA). PpiC domains follow at residues 164–265 (SEEL…KLLD) and 274–373 (RDEV…EVLG).

The protein localises to the periplasm. It carries out the reaction [protein]-peptidylproline (omega=180) = [protein]-peptidylproline (omega=0). Chaperone involved in the correct folding and assembly of outer membrane proteins. Recognizes specific patterns of aromatic residues and the orientation of their side chains, which are found more frequently in integral outer membrane proteins. May act in both early periplasmic and late outer membrane-associated steps of protein maturation. This is Chaperone SurA from Pseudomonas fluorescens (strain ATCC BAA-477 / NRRL B-23932 / Pf-5).